Reading from the N-terminus, the 443-residue chain is Chromosomal replication initiator protein DnaA (443 aa).

Residues 1–80 are domain I, interacts with DnaA modulators; the sequence is MTSQFASLWQ…LGESVEVRFF (80 aa). The domain II stretch occupies residues 80-104; that stretch reads FTPSADSRRSEPSRRPVATEESSPP. Residues 83-105 are disordered; the sequence is SADSRRSEPSRRPVATEESSPPL. Over residues 85–97 the composition is skewed to basic and acidic residues; the sequence is DSRRSEPSRRPVA. The tract at residues 105–321 is domain III, AAA+ region; sequence LLNPKYTFDT…GALNRVIAYA (217 aa). ATP contacts are provided by Gly149, Gly151, Lys152, and Thr153. Residues 322 to 443 form a domain IV, binds dsDNA region; sequence NLSGKSLTSE…QVLKEKIQRA (122 aa).

It belongs to the DnaA family. Oligomerizes as a right-handed, spiral filament on DNA at oriC.

The protein resides in the cytoplasm. In terms of biological role, plays an essential role in the initiation and regulation of chromosomal replication. ATP-DnaA binds to the origin of replication (oriC) to initiate formation of the DNA replication initiation complex once per cell cycle. Binds the DnaA box (a 9 base pair repeat at the origin) and separates the double-stranded (ds)DNA. Forms a right-handed helical filament on oriC DNA; dsDNA binds to the exterior of the filament while single-stranded (ss)DNA is stabiized in the filament's interior. The ATP-DnaA-oriC complex binds and stabilizes one strand of the AT-rich DNA unwinding element (DUE), permitting loading of DNA polymerase. After initiation quickly degrades to an ADP-DnaA complex that is not apt for DNA replication. Binds acidic phospholipids. This Heliobacterium modesticaldum (strain ATCC 51547 / Ice1) protein is Chromosomal replication initiator protein DnaA.